A 93-amino-acid polypeptide reads, in one-letter code: Auxin-induced protein 10A5 (93 aa).

Belongs to the ARG7 family.

In Glycine max (Soybean), this protein is Auxin-induced protein 10A5.